The following is a 220-amino-acid chain: Probable septum site-determining protein MinC (220 aa).

This sequence belongs to the MinC family. In terms of assembly, interacts with MinD and FtsZ.

Cell division inhibitor that blocks the formation of polar Z ring septums. Rapidly oscillates between the poles of the cell to destabilize FtsZ filaments that have formed before they mature into polar Z rings. Prevents FtsZ polymerization. This Photobacterium profundum (strain SS9) protein is Probable septum site-determining protein MinC.